Consider the following 527-residue polypeptide: Zinc finger C2HC domain-containing protein 1C (527 aa).

Disordered regions lie at residues 18–105 (HNKT…GQGK) and 145–170 (VHRK…LPDS). Residues 50-61 (NSFQSKLWSNTE) show a composition bias toward polar residues. A compositionally biased stretch (basic residues) spans 71-85 (RPKRNVCTKARRHSC). Positions 93–102 (QQGSGNNAQG) are enriched in low complexity. Residues 207 to 254 (TQIQRLEAAGESLQKEIRRKEILLQEKLKKTEEGLRRMQKEKKQAIFQ) adopt a coiled-coil conformation. 2 disordered regions span residues 264–316 (LPRR…LSDY) and 352–379 (LGST…EPEL). A compositionally biased stretch (basic and acidic residues) spans 286–298 (FRSEVFSRNRGED). Over residues 301–312 (CDQAQENPSPRQ) the composition is skewed to polar residues. A compositionally biased stretch (low complexity) spans 358–374 (ESSRSGTPGSSGSSSST). C2HC/C3H-type zinc fingers lie at residues 378–407 (ELAK…MQGS) and 489–518 (DYVQ…IKNR). 8 residues coordinate Zn(2+): C382, C385, H397, C401, C493, C496, H508, and C512. Residues 507-527 (RHIPKCKTIKNRPPPPRRHDS) form a disordered region.

It belongs to the ZC2HC1 family. Zn(2+) serves as cofactor.

The polypeptide is Zinc finger C2HC domain-containing protein 1C (Zc2hc1c) (Mus musculus (Mouse)).